The following is a 241-amino-acid chain: MAEKKEPAEGWPILKGEYEVGDPNNCVAVITCGSHLEGQPMLDAGASIVGPCKTENLGLEKVVSHIISNPNIRYLIVTGAEVKGHITGEAMMMLHKNGVKDNRIVGATGAIPYVENLTEESVERLQQQLEECVDLLGTEDLNTITSKIKELAEKDPGAFDAEPMIIQLEEEEEEEEEGGIKPMSAEIATIQARIRNIEKDMINAGEMNKLHSGVLAGKIEGIMVGLVLSLFVLGLLLFGGM.

Residues 1–220 lie on the Cytoplasmic side of the membrane; sequence MAEKKEPAEG…HSGVLAGKIE (220 aa). His-85 contacts 5-hydroxybenzimidazolylcob(I)amide. Residues 221-241 traverse the membrane as a helical segment; the sequence is GIMVGLVLSLFVLGLLLFGGM.

This sequence belongs to the MtrA family. The complex is composed of 8 subunits; MtrA, MtrB, MtrC, MtrD, MtrE, MtrF, MtrG and MtrH. It depends on 5-hydroxybenzimidazolylcob(I)amide as a cofactor.

Its subcellular location is the cell membrane. It carries out the reaction 5-methyl-5,6,7,8-tetrahydromethanopterin + coenzyme M + 2 Na(+)(in) = 5,6,7,8-tetrahydromethanopterin + methyl-coenzyme M + 2 Na(+)(out). Its pathway is one-carbon metabolism; methanogenesis from CO(2); methyl-coenzyme M from 5,10-methylene-5,6,7,8-tetrahydromethanopterin: step 2/2. Part of a complex that catalyzes the formation of methyl-coenzyme M and tetrahydromethanopterin from coenzyme M and methyl-tetrahydromethanopterin. This is an energy-conserving, sodium-ion translocating step. This Methanohalobium evestigatum (strain ATCC BAA-1072 / DSM 3721 / NBRC 107634 / OCM 161 / Z-7303) protein is Tetrahydromethanopterin S-methyltransferase subunit A.